The following is a 76-amino-acid chain: Dermaseptin-S7 (76 aa).

The signal sequence occupies residues 1–22; the sequence is MDILKKSLFLVLFLGLISLSFC. The propeptide occupies 23-45; the sequence is EEEKRENEDEEEQEDDEQSEEKR. Residues 25-45 are disordered; the sequence is EKRENEDEEEQEDDEQSEEKR. Residues 30–41 show a composition bias toward acidic residues; that stretch reads EDEEEQEDDEQS. Q73 is subject to Glutamine amide. The propeptide occupies 75-76; the sequence is EQ.

The protein belongs to the frog skin active peptide (FSAP) family. Dermaseptin subfamily. As to expression, expressed by the skin glands.

Its subcellular location is the secreted. In terms of biological role, antimicrobial peptide. This is Dermaseptin-S7 from Phyllomedusa sauvagei (Sauvage's leaf frog).